Reading from the N-terminus, the 109-residue chain is Large ribosomal subunit protein uL24 (109 aa).

It belongs to the universal ribosomal protein uL24 family. As to quaternary structure, part of the 50S ribosomal subunit.

One of two assembly initiator proteins, it binds directly to the 5'-end of the 23S rRNA, where it nucleates assembly of the 50S subunit. In terms of biological role, one of the proteins that surrounds the polypeptide exit tunnel on the outside of the subunit. The polypeptide is Large ribosomal subunit protein uL24 (Geotalea uraniireducens (strain Rf4) (Geobacter uraniireducens)).